A 388-amino-acid polypeptide reads, in one-letter code: MPERRELREPPMPPSMARVRGRKLRTGWTTGTCAAAAAKAAARALASGEAQEMVEVRLPGRGEGRRVRFGVERCELGEGWAEAVVVKDAGDDPDVTHGAHLTARVSWREEPGVELDRGEGVGVVTKPGLGLPVGAPAINPVPRRMILYSLEEALDTRRRGVRVVISVPGGEEMARKTTNPRLGIVGGISILGTTGIVRPFSTAAWAASVVQAIDVVAAQGGDTFVLSTGGLTERAAMRLLPHLEEVCFIEVGDFTGQAVRRAAKRGLGRGFFVGMAGKLAKLASGVMMTHWTRSRVDTSLLAEITRKAGGSERLAEEVEGANSARHAYELWRAAGLSGAPRLLCARVAENLREHAGGALEMHAIMVDFDTLEPVGASPGALELTAWRG.

Belongs to the CbiD family.

The enzyme catalyses Co-precorrin-5B + S-adenosyl-L-methionine = Co-precorrin-6A + S-adenosyl-L-homocysteine. Its pathway is cofactor biosynthesis; adenosylcobalamin biosynthesis; cob(II)yrinate a,c-diamide from sirohydrochlorin (anaerobic route): step 6/10. Functionally, catalyzes the methylation of C-1 in cobalt-precorrin-5B to form cobalt-precorrin-6A. This Rubrobacter xylanophilus (strain DSM 9941 / JCM 11954 / NBRC 16129 / PRD-1) protein is Cobalt-precorrin-5B C(1)-methyltransferase.